Consider the following 540-residue polypeptide: Cystathionine gamma-synthase 1, chloroplastic (540 aa).

The transit peptide at 1 to 78 (MAVSSCARAF…RNCSNIGVAQ (78 aa)) directs the protein to the chloroplast. Pyridoxal 5'-phosphate contacts are provided by Tyr-203, Arg-205, Gly-233, Met-234, Tyr-258, Ser-353, and Thr-355. Lys-356 is modified (N6-(pyridoxal phosphate)lysine).

It belongs to the trans-sulfuration enzymes family. As to quaternary structure, forms homotetramers composed of 2 homodimers. It depends on pyridoxal 5'-phosphate as a cofactor.

It is found in the plastid. The protein localises to the chloroplast. The enzyme catalyses O-phospho-L-homoserine + L-cysteine = L,L-cystathionine + phosphate. The catalysed reaction is O-succinyl-L-homoserine + L-cysteine = L,L-cystathionine + succinate + H(+). The protein operates within amino-acid biosynthesis; L-methionine biosynthesis via de novo pathway; L-cystathionine from O-succinyl-L-homoserine: step 1/1. With respect to regulation, irreversibly inactivated by DL-propargylglycine. In terms of biological role, catalyzes the first committed step of methionine (Met) biosynthesis. Catalyzes the formation of L-cystathionine from homoserine esters and L-cysteine, via a gamma-replacement reaction. The chain is Cystathionine gamma-synthase 1, chloroplastic from Nicotiana tabacum (Common tobacco).